The chain runs to 440 residues: Serine hydroxymethyltransferase (440 aa).

(6S)-5,6,7,8-tetrahydrofolate-binding positions include Leu119 and 123–125 (GHL). An N6-(pyridoxal phosphate)lysine modification is found at Lys228. 370-372 (SPF) is a binding site for (6S)-5,6,7,8-tetrahydrofolate.

This sequence belongs to the SHMT family. In terms of assembly, homodimer. Pyridoxal 5'-phosphate serves as cofactor.

It localises to the cytoplasm. The enzyme catalyses (6R)-5,10-methylene-5,6,7,8-tetrahydrofolate + glycine + H2O = (6S)-5,6,7,8-tetrahydrofolate + L-serine. It participates in one-carbon metabolism; tetrahydrofolate interconversion. The protein operates within amino-acid biosynthesis; glycine biosynthesis; glycine from L-serine: step 1/1. Catalyzes the reversible interconversion of serine and glycine with tetrahydrofolate (THF) serving as the one-carbon carrier. This reaction serves as the major source of one-carbon groups required for the biosynthesis of purines, thymidylate, methionine, and other important biomolecules. Also exhibits THF-independent aldolase activity toward beta-hydroxyamino acids, producing glycine and aldehydes, via a retro-aldol mechanism. The sequence is that of Serine hydroxymethyltransferase from Chloroherpeton thalassium (strain ATCC 35110 / GB-78).